A 200-amino-acid polypeptide reads, in one-letter code: 3-isopropylmalate dehydratase small subunit (200 aa).

The protein belongs to the LeuD family. LeuD type 1 subfamily. Heterodimer of LeuC and LeuD.

The catalysed reaction is (2R,3S)-3-isopropylmalate = (2S)-2-isopropylmalate. The protein operates within amino-acid biosynthesis; L-leucine biosynthesis; L-leucine from 3-methyl-2-oxobutanoate: step 2/4. In terms of biological role, catalyzes the isomerization between 2-isopropylmalate and 3-isopropylmalate, via the formation of 2-isopropylmaleate. In Pectobacterium atrosepticum (strain SCRI 1043 / ATCC BAA-672) (Erwinia carotovora subsp. atroseptica), this protein is 3-isopropylmalate dehydratase small subunit.